Consider the following 630-residue polypeptide: 1,4-alpha-glucan branching enzyme GlgB (630 aa).

Catalysis depends on D308, which acts as the Nucleophile. Residue E361 is the Proton donor of the active site.

It belongs to the glycosyl hydrolase 13 family. GlgB subfamily. Monomer.

The catalysed reaction is Transfers a segment of a (1-&gt;4)-alpha-D-glucan chain to a primary hydroxy group in a similar glucan chain.. The protein operates within glycan biosynthesis; glycogen biosynthesis. In terms of biological role, catalyzes the formation of the alpha-1,6-glucosidic linkages in glycogen by scission of a 1,4-alpha-linked oligosaccharide from growing alpha-1,4-glucan chains and the subsequent attachment of the oligosaccharide to the alpha-1,6 position. This is 1,4-alpha-glucan branching enzyme GlgB from Halothermothrix orenii (strain H 168 / OCM 544 / DSM 9562).